Reading from the N-terminus, the 339-residue chain is GTP 3',8-cyclase (339 aa).

Residues 13-249 form the Radical SAM core domain; sequence RYGRPLRDLR…GEVAQRHAFA (237 aa). R22 serves as a coordination point for GTP. [4Fe-4S] cluster contacts are provided by C29 and C33. Y35 serves as a coordination point for S-adenosyl-L-methionine. C36 serves as a coordination point for [4Fe-4S] cluster. R75 contributes to the GTP binding site. G79 serves as a coordination point for S-adenosyl-L-methionine. A GTP-binding site is contributed by T106. S130 is an S-adenosyl-L-methionine binding site. Residue K168 coordinates GTP. Position 202 (M202) interacts with S-adenosyl-L-methionine. 2 residues coordinate [4Fe-4S] cluster: C266 and C269. 271–273 contributes to the GTP binding site; the sequence is RAR. [4Fe-4S] cluster is bound at residue C283.

The protein belongs to the radical SAM superfamily. MoaA family. Monomer and homodimer. Requires [4Fe-4S] cluster as cofactor.

The catalysed reaction is GTP + AH2 + S-adenosyl-L-methionine = (8S)-3',8-cyclo-7,8-dihydroguanosine 5'-triphosphate + 5'-deoxyadenosine + L-methionine + A + H(+). It participates in cofactor biosynthesis; molybdopterin biosynthesis. Its function is as follows. Catalyzes the cyclization of GTP to (8S)-3',8-cyclo-7,8-dihydroguanosine 5'-triphosphate. The polypeptide is GTP 3',8-cyclase (Xanthomonas campestris pv. campestris (strain B100)).